A 729-amino-acid polypeptide reads, in one-letter code: Alpha-galactosidase AgaA (729 aa).

Residues D53, W199, D366–D367, R443, K476–N480, C526, and D548 each bind substrate. The active-site Nucleophile is the D478. The active-site Proton donor is the D548.

It belongs to the glycosyl hydrolase 36 family. As to quaternary structure, homotetramer.

The enzyme catalyses Hydrolysis of terminal, non-reducing alpha-D-galactose residues in alpha-D-galactosides, including galactose oligosaccharides, galactomannans and galactolipids.. With respect to regulation, not inhibited by D-galactose or sucrose. Inhibited by pharmaceutical drug 1-deoxygalactonojirimycin. In terms of biological role, hydrolyzes the short-chain alpha-galactosaccharides raffinose and stachyose. The chain is Alpha-galactosidase AgaA from Geobacillus stearothermophilus (Bacillus stearothermophilus).